A 250-amino-acid chain; its full sequence is Developmental protein SEPALLATA 2 (250 aa).

Positions 3–57 constitute an MADS-box domain; the sequence is RGRVELKRIENKINRQVTFAKRRNGLLKKAYELSVLCDAEVSLIVFSNRGKLYEF. Residues 85–150 adopt a coiled-coil conformation; it reads AKELENSYRE…CIKTQYMLDQ (66 aa). Positions 88–178 constitute a K-box domain; the sequence is LENSYREYLK…SMKLEDMIGV (91 aa).

As to quaternary structure, heterodimer with AGAMOUS capable of binding to CArG-box sequences. Interacts with TT16/AGL32.

Its subcellular location is the nucleus. Probable transcription factor. Functions with SEPALLATA1/AGL2 and SEPALLATA3/AGL9 to ensure proper development of petals, stamens and carpels and to prevent the indeterminate growth of the flower meristem. Forms a heterodimer via the K-box domain with AG, that could be involved in genes regulation during floral meristem development. This chain is Developmental protein SEPALLATA 2 (SEP2), found in Arabidopsis thaliana (Mouse-ear cress).